We begin with the raw amino-acid sequence, 192 residues long: Peptide methionine sulfoxide reductase MsrA 1 (192 aa).

Cys25 is a catalytic residue.

Belongs to the MsrA Met sulfoxide reductase family.

It carries out the reaction L-methionyl-[protein] + [thioredoxin]-disulfide + H2O = L-methionyl-(S)-S-oxide-[protein] + [thioredoxin]-dithiol. The catalysed reaction is [thioredoxin]-disulfide + L-methionine + H2O = L-methionine (S)-S-oxide + [thioredoxin]-dithiol. Its function is as follows. Has an important function as a repair enzyme for proteins that have been inactivated by oxidation. Catalyzes the reversible oxidation-reduction of methionine sulfoxide in proteins to methionine. In Rhodopirellula baltica (strain DSM 10527 / NCIMB 13988 / SH1), this protein is Peptide methionine sulfoxide reductase MsrA 1.